The primary structure comprises 165 residues: Natriuretic peptide Na-NP (165 aa).

The first 25 residues, Met1 to Gly25, serve as a signal peptide directing secretion. A propeptide spanning residues Lys26–Gln83 is cleaved from the precursor. The span at Ser56–His68 shows a compositional bias: basic and acidic residues. Disordered stretches follow at residues Ser56–Asp100 and Pro135–Ile165. An intrachain disulfide couples Cys94 to Cys110. Residues Ile129 to Ile165 constitute a propeptide that is removed on maturation. Positions Pro135 to His149 are enriched in basic and acidic residues. The span at Val154–Ile165 shows a compositional bias: gly residues.

This sequence belongs to the natriuretic peptide family. As to expression, expressed by the venom gland.

The protein localises to the secreted. Functionally, natriuretic peptide that dose-dependently induces the rapid relaxation of rat aortic strips phenylephrine-precontracted. Acts by stimulating cGMP production in a dose-dependent manner (by probably activating NPR1 and/or NPR2). May also show potent hypotensive effects. The sequence is that of Natriuretic peptide Na-NP from Naja atra (Chinese cobra).